The sequence spans 285 residues: Tropomyosin alpha-3 chain (285 aa).

The stretch at 1-285 (MMEAIKKKMQ…DHALNDMTSI (285 aa)) forms a coiled coil. Met-2 carries the post-translational modification N-acetylmethionine. Position 2 is an N-acetylalanine (Met-2). Thr-54 carries the post-translational modification Phosphothreonine. A phosphoserine mark is found at Ser-62 and Ser-88. Thr-109 carries the phosphothreonine modification. Residues Ser-207 and Ser-216 each carry the phosphoserine modification. Ile-228 is modified (N6-acetyllysine). Thr-253 is subject to Phosphothreonine. Tyr-262 is subject to Phosphotyrosine. Residue Ser-272 is modified to Phosphoserine. Thr-283 is modified (phosphothreonine). Ser-284 is subject to Phosphoserine.

Belongs to the tropomyosin family. Homodimer. Heterodimer of an alpha (TPM1, TPM3 or TPM4) and a beta (TPM2) chain. Interacts with TMOD1. Interacts with TNNT1.

The protein localises to the cytoplasm. It localises to the cytoskeleton. In terms of biological role, binds to actin filaments in muscle and non-muscle cells. Plays a central role, in association with the troponin complex, in the calcium dependent regulation of vertebrate striated muscle contraction. Smooth muscle contraction is regulated by interaction with caldesmon. In non-muscle cells is implicated in stabilizing cytoskeleton actin filaments. This Mus musculus (Mouse) protein is Tropomyosin alpha-3 chain (Tpm3).